Here is an 839-residue protein sequence, read N- to C-terminus: NT-3 growth factor receptor (839 aa).

The first 31 residues, 1–31 (MDVSLCPAKCSFWRIFLLGSVWLDYVGSVLA), serve as a signal peptide directing secretion. Disulfide bonds link C32-C38 and C36-C45. At 32-429 (CPANCVCSKT…TVTHKPEEDT (398 aa)) the chain is on the extracellular side. Residues N72 and N79 are each glycosylated (N-linked (GlcNAc...) asparagine). LRR repeat units lie at residues 104-125 (GLQK…AFAK) and 128-149 (HLRY…LFQT). 2 N-linked (GlcNAc...) asparagine glycosylation sites follow: N133 and N163. Residues 160-209 (NFFNCSCDIRWMQLWQEQGEAKLNSQNLYCINADGSQLPLFRMNISQCDL) enclose the LRRCT domain. Intrachain disulfides connect C164–C189 and C166–C207. Residues N203, N218, N232, N259, N267, N272, and N294 are each glycosylated (N-linked (GlcNAc...) asparagine). Ig-like C2-type domains follow at residues 210–300 (PEIS…VALT) and 309–382 (SLEE…IAKN). C231 and C284 are joined by a disulfide. An intrachain disulfide couples C320 to C362. 2 N-linked (GlcNAc...) asparagine glycosylation sites follow: N375 and N388. The chain crosses the membrane as a helical span at residues 430-453 (FGVSIAVGLAAFACVLLVVLFVMI). The Cytoplasmic segment spans residues 454 to 839 (NKYGRRSKFG…ATPIYLDILG (386 aa)). S493 carries the post-translational modification Phosphoserine. Y516 carries the post-translational modification Phosphotyrosine; by autocatalysis. Residues 538–839 (IVLKRELGEG…ATPIYLDILG (302 aa)) enclose the Protein kinase domain. ATP-binding positions include 544 to 552 (LGEGAFGKV) and K572. Residue D679 is the Proton acceptor of the active site. A phosphotyrosine; by autocatalysis mark is found at Y705, Y709, and Y710.

The protein belongs to the protein kinase superfamily. Tyr protein kinase family. Insulin receptor subfamily. In terms of assembly, exists in a dynamic equilibrium between monomeric (low affinity) and dimeric (high affinity) structures. Binds SH2B2. Interacts with SQSTM1 and KIDINS220. Interacts with PTPRS. Interacts with MAPK8IP3/JIP3. Post-translationally, ligand-mediated auto-phosphorylation. Widely expressed but mainly in nervous tissue. Isoform 2 is expressed at higher levels in adult brain than in fetal brain.

It localises to the membrane. It carries out the reaction L-tyrosyl-[protein] + ATP = O-phospho-L-tyrosyl-[protein] + ADP + H(+). Its function is as follows. Receptor tyrosine kinase involved in nervous system and probably heart development. Upon binding of its ligand NTF3/neurotrophin-3, NTRK3 autophosphorylates and activates different signaling pathways, including the phosphatidylinositol 3-kinase/AKT and the MAPK pathways, that control cell survival and differentiation. The sequence is that of NT-3 growth factor receptor (NTRK3) from Homo sapiens (Human).